The following is a 226-amino-acid chain: Large ribosomal subunit protein uL1 (226 aa).

It belongs to the universal ribosomal protein uL1 family. Part of the 50S ribosomal subunit.

Its function is as follows. Binds directly to 23S rRNA. The L1 stalk is quite mobile in the ribosome, and is involved in E site tRNA release. In terms of biological role, protein L1 is also a translational repressor protein, it controls the translation of the L11 operon by binding to its mRNA. The sequence is that of Large ribosomal subunit protein uL1 from Borreliella burgdorferi (strain ZS7) (Borrelia burgdorferi).